A 734-amino-acid polypeptide reads, in one-letter code: Regulator of G-protein signaling rgs-6 (734 aa).

The segment at Met-1–Asn-24 is disordered. The segment covering Asn-8–Asn-24 has biased composition (low complexity). An RGS domain is found at Ile-46 to Ser-157. Disordered stretches follow at residues Gln-162–His-236, His-489–Ala-515, and Val-538–Val-734. A compositionally biased stretch (acidic residues) spans Thr-166–Asp-176. The segment covering His-180 to Glu-191 has biased composition (polar residues). Residues Ala-194–Ala-208 show a composition bias toward low complexity. Composition is skewed to polar residues over residues Ser-494 to Arg-506 and Val-538 to Arg-557. 2 stretches are compositionally biased toward basic and acidic residues: residues Ser-563–Asp-585 and Thr-606–Asp-619. Low complexity predominate over residues Ala-642 to Thr-694. 2 stretches are compositionally biased toward polar residues: residues Ser-705–Leu-715 and Arg-724–Val-734.

This chain is Regulator of G-protein signaling rgs-6, found in Caenorhabditis elegans.